A 211-amino-acid chain; its full sequence is Uridine kinase (211 aa).

Residue Gly12 to Thr19 participates in ATP binding.

The protein belongs to the uridine kinase family.

It is found in the cytoplasm. It catalyses the reaction uridine + ATP = UMP + ADP + H(+). The enzyme catalyses cytidine + ATP = CMP + ADP + H(+). The protein operates within pyrimidine metabolism; CTP biosynthesis via salvage pathway; CTP from cytidine: step 1/3. It participates in pyrimidine metabolism; UMP biosynthesis via salvage pathway; UMP from uridine: step 1/1. This is Uridine kinase from Streptococcus thermophilus (strain CNRZ 1066).